A 163-amino-acid chain; its full sequence is Campylobacter invasion antigen D (163 aa).

The short motif at 135 to 145 (KKDDLENRLNL) is the MKD element.

In terms of assembly, interacts with the host cell protein IQGAP1, thus displacing RACGAP1 from the IQGAP1 complex.

The protein resides in the secreted. It localises to the host cytoplasm. Its subcellular location is the host cytosol. Functionally, effector protein required for the development of acute disease and colon inflammatory lesions. Required for maximal host cell invasion and maximal secretion of the inflammatory chemokine interleukin-8 (IL-8) from host cells. Acts by activating the host MAP kinase signaling pathways ERK-1/2 and p38 to promote both cellular invasion and the release of IL-8. CiaD mediated activation of ERK-1/2 leads to the phosphorylation of host cortactin (CTTN) on serine residues and association of cortactin with N-WASP, promoting actin cytoskeleton rearrangement, membrane ruffling and host cell invasion. In addition, maximal host cell invasion requires interaction with the host cell protein IQGAP1, a Ras GTPase-activating-like protein. Binding to IQGAP1 facilitates the activation of the Rho GTPases RAC1 and CDC42, further promoting actin reorganization and bacterial uptake. CiaD promotes RAC1 activation by excluding RACGAP1 from the IQGAP1 complex, preventing the deactivation of RAC1. CiaD probably activates ERK signaling upstream or independently of IQGAP1. This is Campylobacter invasion antigen D from Campylobacter jejuni subsp. jejuni serotype O:2 (strain ATCC 700819 / NCTC 11168).